A 35-amino-acid polypeptide reads, in one-letter code: Cecropin-A (35 aa).

Leucine 35 is subject to Leucine amide.

As to quaternary structure, monomer. In terms of tissue distribution, hemolymph.

Its subcellular location is the secreted. Cecropins have lytic and antibacterial activity against several Gram-positive and Gram-negative bacteria. Also has activity against fungi. In Heliothis virescens (Tobacco budworm moth), this protein is Cecropin-A.